The primary structure comprises 260 residues: MVLIRVLANLLILQLSYAQKSSELVVGGDECNINEHRFLVALYEYTSMTFICGGTLINQEWVLTAAHCDRDTIYIYIGMHDKYVKFDDEQGRHPKEKYIFNCSNNFTKWDKDIMLIKLDYPVNYSEHIAPLSLPSSPPSMGSVCRVMGWGAITPTNETLPDVPHCANINILDHALCRAVFPGLPATSRTLCAGVLQGGTDTCNRDSGGPLICNGQFQGIVFWGWYPCAQPRVPALYTKVFDHLDWIQSIIAGNTDAACPP.

A signal peptide spans Met-1–Ala-18. Positions Gln-19–Leu-24 are excised as a propeptide. The Peptidase S1 domain maps to Val-25–Ala-251. 6 cysteine pairs are disulfide-bonded: Cys-31/Cys-165, Cys-52/Cys-68, Cys-102/Cys-258, Cys-144/Cys-212, Cys-176/Cys-191, and Cys-202/Cys-227. His-67 (charge relay system) is an active-site residue. Residues Asn-101 and Asn-105 are each glycosylated (N-linked (GlcNAc...) asparagine). Asp-112 acts as the Charge relay system in catalysis. N-linked (GlcNAc...) asparagine glycans are attached at residues Asn-123 and Asn-156. Ser-206 acts as the Charge relay system in catalysis.

The protein belongs to the peptidase S1 family. Snake venom subfamily. As to quaternary structure, monomer. In terms of tissue distribution, expressed by the venom gland.

It localises to the secreted. Its function is as follows. Snake venom serine protease that may act in the hemostasis system of the prey. This is Snake venom serine protease 2B (TLG2B) from Craspedocephalus gramineus (Bamboo pit viper).